Consider the following 193-residue polypeptide: MNTYKNSLNHFLNLVDCLEKIPNVGKKSAFKMAYHLGLENPYLALKITHALRNALENLKTCASCNALSETEVSEICSDESRQNSQLCMVLHPRDVFILEDLKDFLGRYYVLNSIEDVDFNALEKRLIGENIKEIIFAFPPTLANDSLMLYIEDKLQHLHLTFTKIAQGVPTGVNFENIDSVSLSRAFNSRIKA.

The C4-type; degenerate zinc-finger motif lies at 61-76 (CASCNALSETEVSEIC). One can recognise a Toprim domain in the interval 84–170 (SQLCMVLHPR…TFTKIAQGVP (87 aa)).

This sequence belongs to the RecR family.

Functionally, may play a role in DNA repair. It seems to be involved in an RecBC-independent recombinational process of DNA repair. It may act with RecF and RecO. The protein is Recombination protein RecR of Helicobacter pylori (strain J99 / ATCC 700824) (Campylobacter pylori J99).